The chain runs to 351 residues: uncharacterized protein (351 aa).

Residues 1–27 (MKNKKRVLIASSLSCAILLLSAATTQA) form the signal peptide. A disordered region spans residues 27–71 (ANSAHKDSQDQNKKEHVDKSQQKDKRNVTNKDKNSTAPDDIGKNG). Residues 30-60 (AHKDSQDQNKKEHVDKSQQKDKRNVTNKDKN) show a composition bias toward basic and acidic residues.

Belongs to the aerolysin family.

This is an uncharacterized protein from Staphylococcus aureus (strain USA300).